Reading from the N-terminus, the 66-residue chain is DNA gyrase inhibitor YacG (66 aa).

Cysteine 10, cysteine 13, cysteine 29, and cysteine 33 together coordinate Zn(2+).

The protein belongs to the DNA gyrase inhibitor YacG family. In terms of assembly, interacts with GyrB. The cofactor is Zn(2+).

Inhibits all the catalytic activities of DNA gyrase by preventing its interaction with DNA. Acts by binding directly to the C-terminal domain of GyrB, which probably disrupts DNA binding by the gyrase. This Edwardsiella ictaluri (strain 93-146) protein is DNA gyrase inhibitor YacG.